Here is a 246-residue protein sequence, read N- to C-terminus: NAD-dependent protein deacylase (246 aa).

The 245-residue stretch at 1–245 (MKEFITKHRD…ELIREILDNP (245 aa)) folds into the Deacetylase sirtuin-type domain. 20-39 (GAGISAESGIPTFRGSEGLW) is an NAD(+) binding site. Tyr64 and Arg67 together coordinate substrate. 98–101 (QNVD) serves as a coordination point for NAD(+). Residue His116 is the Proton acceptor of the active site. Residues Cys124, Cys127, Cys146, and Cys149 each coordinate Zn(2+). NAD(+) is bound by residues 186–188 (GTS), 212–214 (NPE), and Thr230.

This sequence belongs to the sirtuin family. Class III subfamily. It depends on Zn(2+) as a cofactor.

It is found in the cytoplasm. The enzyme catalyses N(6)-acetyl-L-lysyl-[protein] + NAD(+) + H2O = 2''-O-acetyl-ADP-D-ribose + nicotinamide + L-lysyl-[protein]. The catalysed reaction is N(6)-succinyl-L-lysyl-[protein] + NAD(+) + H2O = 2''-O-succinyl-ADP-D-ribose + nicotinamide + L-lysyl-[protein]. Functionally, NAD-dependent lysine deacetylase and desuccinylase that specifically removes acetyl and succinyl groups on target proteins. Modulates the activities of several proteins which are inactive in their acylated form. The protein is NAD-dependent protein deacylase of Leptospira interrogans serogroup Icterohaemorrhagiae serovar copenhageni (strain Fiocruz L1-130).